A 362-amino-acid chain; its full sequence is Serine/threonine-protein kinase SBK2 (362 aa).

Residues 1 to 11 (MPGKQSEDKPM) are compositionally biased toward basic and acidic residues. Residues 1–26 (MPGKQSEDKPMEVSTVEDGGDEGLGG) form a disordered region. Residues 62 to 330 (YEEVRPLGQG…IKSYLGQPWK (269 aa)) form the Protein kinase domain. ATP-binding positions include 68–76 (LGQGRFGRV) and K91. D183 acts as the Proton acceptor in catalysis. Positions 329–362 (WKQREGEAEELATELREDGWRGGQEAAKGEQPAC) are disordered.

Belongs to the protein kinase superfamily. Ser/Thr protein kinase family. STKL subfamily.

The enzyme catalyses L-seryl-[protein] + ATP = O-phospho-L-seryl-[protein] + ADP + H(+). The catalysed reaction is L-threonyl-[protein] + ATP = O-phospho-L-threonyl-[protein] + ADP + H(+). This is Serine/threonine-protein kinase SBK2 (Sbk2) from Mus musculus (Mouse).